The sequence spans 312 residues: Olfactory receptor 2J2 (312 aa).

The Extracellular portion of the chain corresponds to 1 to 26; sequence MMIKKNASSEDFFILLGFSNWPQLEV. Residue Asn6 is glycosylated (N-linked (GlcNAc...) asparagine). A helical membrane pass occupies residues 27–50; it reads VLFVVILIFYLMTLTGNLFIIILS. Residues 51–58 lie on the Cytoplasmic side of the membrane; the sequence is YVDSHLHT. Residues 59-80 form a helical membrane-spanning segment; the sequence is PMYFFLSNLSFLDLCHTTSSIP. The Extracellular segment spans residues 81–101; sequence QLLVNLRGPEKTISYAGCMVQ. Residues Cys98 and Cys190 are joined by a disulfide bond. A helical membrane pass occupies residues 102–121; the sequence is LYFVLALGIAECVLLVVMSY. Residues 122-140 are Cytoplasmic-facing; that stretch reads DRYVAVCRPLHYTVLMHPR. The chain crosses the membrane as a helical span at residues 141–159; sequence FCHLLAAASWVIGFTISAL. Residues 160–196 lie on the Extracellular side of the membrane; sequence HSSFTFWVPLCGHRLVDHFFCEVPALLRLSCVDTHAN. A helical transmembrane segment spans residues 197-220; that stretch reads ELTLMVMSSIFVLIPLILILTAYG. At 221-237 the chain is on the cytoplasmic side; that stretch reads AIARAVLSMQSTTGLQK. Residues 238 to 260 traverse the membrane as a helical segment; the sequence is VFRTCGAHLMVVSLFFIPVMCMY. Residues 261–273 are Extracellular-facing; it reads LQPPSENSPDQGK. A helical membrane pass occupies residues 274 to 293; it reads FIALFYTVVTPSLNPLIYTL. Over 294–312 the chain is Cytoplasmic; sequence RNKHVKGAAKRLLGWEWGK.

Belongs to the G-protein coupled receptor 1 family.

The protein resides in the cell membrane. Odorant receptor. The chain is Olfactory receptor 2J2 (OR2J2) from Homo sapiens (Human).